The primary structure comprises 102 residues: MFAIVETGGKQYKVKEQDVIKIEKLNASVGEEVTLDKVIALADVNNNIVFTHNAIVTASVLEQCRNDKIIVFKKKRRKNYRRKNGHRQYMTVLRVTKINNME.

Belongs to the bacterial ribosomal protein bL21 family. In terms of assembly, part of the 50S ribosomal subunit. Contacts protein L20.

Its function is as follows. This protein binds to 23S rRNA in the presence of protein L20. This Ehrlichia chaffeensis (strain ATCC CRL-10679 / Arkansas) protein is Large ribosomal subunit protein bL21.